A 691-amino-acid polypeptide reads, in one-letter code: Elongation factor G (691 aa).

The tr-type G domain maps to 8–283; that stretch reads EDYRNIGIMA…AVVDFLPSPL (276 aa). Residues 17-24, 81-85, and 135-138 each bind GTP; these read AHIDAGKT, DTPGH, and NKMD.

This sequence belongs to the TRAFAC class translation factor GTPase superfamily. Classic translation factor GTPase family. EF-G/EF-2 subfamily.

The protein resides in the cytoplasm. Catalyzes the GTP-dependent ribosomal translocation step during translation elongation. During this step, the ribosome changes from the pre-translocational (PRE) to the post-translocational (POST) state as the newly formed A-site-bound peptidyl-tRNA and P-site-bound deacylated tRNA move to the P and E sites, respectively. Catalyzes the coordinated movement of the two tRNA molecules, the mRNA and conformational changes in the ribosome. This Parvibaculum lavamentivorans (strain DS-1 / DSM 13023 / NCIMB 13966) protein is Elongation factor G.